Consider the following 561-residue polypeptide: Centromere protein T (561 aa).

The interval 1 to 83 (MADHNPDSDS…HIQASGHLEE (83 aa)) is disordered. Residues 18–27 (RVLDTADPRT) are compositionally biased toward basic and acidic residues. Low complexity predominate over residues 34 to 46 (ARAGARRALLETA). Serine 47 is subject to Phosphoserine. Threonine 85 is subject to Phosphothreonine. The segment at 93–421 (ILLTAPESSI…RHHQFLEPAP (329 aa)) is flexible stalk domain. 2 disordered regions span residues 256–292 (HSLP…PGKP) and 333–457 (AEKK…DPHK). Over residues 276–288 (KTQSSGPGLQKNS) the composition is skewed to polar residues. 3 positions are modified to phosphoserine: serine 343, serine 345, and serine 356. Residues 357–367 (RVEEAEGHTEV) are compositionally biased toward basic and acidic residues. A phosphoserine mark is found at serine 373, serine 385, serine 386, and serine 397. Over residues 395–407 (AASPESASSTPES) the composition is skewed to low complexity.

The protein belongs to the CENP-T/CNN1 family. Component of the CENPA-CAD complex, composed of CENPI, CENPK, CENPL, CENPO, CENPP, CENPQ, CENPR and CENPS. The CENPA-CAD complex is probably recruited on centromeres by the CENPA-NAC complex, at least composed of CENPA, CENPC, CENPH, CENPM, CENPN, CENPT and CENPU. Identified in a centromeric complex containing histones H2A, H2B, H3 and H4, and at least CENPA, CENPB, CENPC, CENPT, CENPN, HJURP, SUPT16H, SSRP1 and RSF1. Interacts (via N-terminus) with the NDC80 complex. Heterodimer with CENPW; this dimer coassembles with CENPS-CENPX heterodimers at centromeres to form the tetrameric CENP-T-W-S-X complex. Dynamically phosphorylated at Ser-47 and probably also other sites during the cell cycle. Phosphorylated at Ser-47 during G2 phase, metaphase and anaphase, but not during telophase or G1 phase.

The protein resides in the nucleus. It is found in the chromosome. The protein localises to the centromere. Its subcellular location is the kinetochore. Its function is as follows. Component of the CENPA-NAC (nucleosome-associated) complex, a complex that plays a central role in assembly of kinetochore proteins, mitotic progression and chromosome segregation. The CENPA-NAC complex recruits the CENPA-CAD (nucleosome distal) complex and may be involved in incorporation of newly synthesized CENPA into centromeres. Part of a nucleosome-associated complex that binds specifically to histone H3-containing nucleosomes at the centromere, as opposed to nucleosomes containing CENPA. Component of the heterotetrameric CENP-T-W-S-X complex that binds and supercoils DNA, and plays an important role in kinetochore assembly. CENPT has a fundamental role in kinetochore assembly and function. It is one of the inner kinetochore proteins, with most further proteins binding downstream. Required for normal chromosome organization and normal progress through mitosis. This chain is Centromere protein T (CENPT), found in Homo sapiens (Human).